Here is a 255-residue protein sequence, read N- to C-terminus: Octanoyltransferase (255 aa).

Positions 1–21 are disordered; that stretch reads MCATPVSPSPESPRSAQAGAA. The 187-residue stretch at 56–242 folds into the BPL/LPL catalytic domain; it reads FETSDEIWLV…SLIANIDGIP (187 aa). Substrate is bound by residues 96–103, 173–175, and 186–188; these read RGGQITYH, ALG, and GVS. The Acyl-thioester intermediate role is filled by C204.

It belongs to the LipB family.

It is found in the cytoplasm. It catalyses the reaction octanoyl-[ACP] + L-lysyl-[protein] = N(6)-octanoyl-L-lysyl-[protein] + holo-[ACP] + H(+). It participates in protein modification; protein lipoylation via endogenous pathway; protein N(6)-(lipoyl)lysine from octanoyl-[acyl-carrier-protein]: step 1/2. In terms of biological role, catalyzes the transfer of endogenously produced octanoic acid from octanoyl-acyl-carrier-protein onto the lipoyl domains of lipoate-dependent enzymes. Lipoyl-ACP can also act as a substrate although octanoyl-ACP is likely to be the physiological substrate. The chain is Octanoyltransferase from Paraburkholderia phymatum (strain DSM 17167 / CIP 108236 / LMG 21445 / STM815) (Burkholderia phymatum).